The chain runs to 171 residues: Superoxide dismutase [Cu-Zn] 2 (171 aa).

A signal peptide spans 1-20 (MKKLSGVLAGSLLLISASFS). Residues histidine 67, histidine 69, and histidine 85 each coordinate Cu cation. Cysteine 74 and cysteine 167 are disulfide-bonded. Residues histidine 85, histidine 93, histidine 102, and aspartate 105 each contribute to the Zn(2+) site. Cu cation is bound at residue histidine 147.

It belongs to the Cu-Zn superoxide dismutase family. Cu cation is required as a cofactor. The cofactor is Zn(2+).

It catalyses the reaction 2 superoxide + 2 H(+) = H2O2 + O2. In terms of biological role, destroys radicals which are normally produced within the cells and which are toxic to biological systems. The sequence is that of Superoxide dismutase [Cu-Zn] 2 (sodC2) from Aquifex aeolicus (strain VF5).